We begin with the raw amino-acid sequence, 200 residues long: Probable nicotinate-nucleotide adenylyltransferase (200 aa).

The protein belongs to the NadD family.

It carries out the reaction nicotinate beta-D-ribonucleotide + ATP + H(+) = deamido-NAD(+) + diphosphate. The protein operates within cofactor biosynthesis; NAD(+) biosynthesis; deamido-NAD(+) from nicotinate D-ribonucleotide: step 1/1. Its function is as follows. Catalyzes the reversible adenylation of nicotinate mononucleotide (NaMN) to nicotinic acid adenine dinucleotide (NaAD). The protein is Probable nicotinate-nucleotide adenylyltransferase of Clostridium botulinum (strain Eklund 17B / Type B).